Consider the following 463-residue polypeptide: Glycine--tRNA ligase (463 aa).

R100 and E175 together coordinate substrate. ATP is bound by residues 207 to 209 (RNE), 217 to 222 (FRTREF), 291 to 292 (EL), and 335 to 338 (GADR). 222 to 226 (FEQME) is a substrate binding site. 331 to 335 (EPSVG) lines the substrate pocket.

Belongs to the class-II aminoacyl-tRNA synthetase family. In terms of assembly, homodimer.

It is found in the cytoplasm. The enzyme catalyses tRNA(Gly) + glycine + ATP = glycyl-tRNA(Gly) + AMP + diphosphate. Catalyzes the attachment of glycine to tRNA(Gly). The chain is Glycine--tRNA ligase from Clostridium kluyveri (strain NBRC 12016).